The sequence spans 727 residues: Cyclin-T1 (727 aa).

The residue at position 117 (Ser117) is a Phosphoserine. Positions 253-270 (KRIWNWRAWQADRKTKAD) match the Nuclear localization signal motif. A Glycyl lysine isopeptide (Lys-Gly) (interchain with G-Cter in SUMO2) cross-link involves residue Lys343. Position 389 is a phosphoserine (Ser389). The stretch at 389–420 (SLKEYRAKHAEELAAQKRQLENMEANVKSQYA) forms a coiled coil. Lys391 is modified (N6-acetyllysine). Lys416 is covalently cross-linked (Glycyl lysine isopeptide (Lys-Gly) (interchain with G-Cter in SUMO2)). 2 positions are modified to ADP-ribosylserine: Ser417 and Ser475. A histidine-rich domain (HRD) region spans residues 481-551 (IKMRIKVHTA…RLGDPKHSSQ (71 aa)). Residue Lys482 forms a Glycyl lysine isopeptide (Lys-Gly) (interchain with G-Cter in SUMO2) linkage. N6-(ADP-ribosyl)lysine is present on Lys486. Basic and acidic residues predominate over residues 487 to 507 (VHTAADKHNSVDDSVTKNREH). Disordered regions lie at residues 487 to 631 (VHTA…QPSC) and 691 to 727 (YMNP…PLPK). His488 is subject to ADP-ribosylhistidine. Ser496 and Ser500 each carry phosphoserine. The segment covering 508 to 531 (KEKHKTHPSNHHHHHNHHSHKHSH) has biased composition (basic residues). His531 carries the ADP-ribosylhistidine modification. ADP-ribosylserine is present on residues Ser532, Ser550, and Ser553. ADP-ribosylhistidine is present on His557. Residues 561-571 (SLSSSFSSSSS) show a composition bias toward low complexity. Position 564 is an ADP-ribosylserine (Ser564). Ser565 bears the Phosphoserine mark. Polar residues predominate over residues 616–631 (GHSSDTSGLHFSQPSC). The segment covering 711-727 (PPPLPSEPPPPLPPLPK) has biased composition (pro residues).

This sequence belongs to the cyclin family. Cyclin C subfamily. As to quaternary structure, cyclin-T1 is the predominant cyclin that associates with CDK9 to form a heterodimer called P-TEFb. P-TEFb forms a complex with AFF4/AF5Q31. Component of a complex which is at least composed of HTATSF1/Tat-SF1, P-TEFb complex, RNA pol II, SUPT5H, and NCL/nucleolin. Component of the 7SK snRNP complex at least composed of P-TEFb (composed of CDK9 and CCNT1/cyclin-T1), HEXIM1, HEXIM2, BCDIN3, SART3 proteins and 7SK and U6 snRNAs. Interacts (via central region) with ZMYND8 (via N-terminus); the interaction is direct and the association appears to occur between homodimeric ZMYND8 and the activated form of the P-TEFb complex. Interacts with BRD4, targets chromatin binding. Interacts with JMJD6. Interacts with MDFIC. Interacts with HSF1. Interacts with HTATSF1. Interacts with TBX21. (Microbial infection) Binds to BIV Tat, however Tat binds TAR RNA in a Cyc-T1-independent mode. ADP-ribosylation on serine residues by PARP1 in response to DNA damage disrupts the phase separation activity of CCNT1, thereby preventing activation of CDK9.

Its subcellular location is the nucleus. Its function is as follows. Regulatory subunit of the cyclin-dependent kinase pair (CDK9/cyclin-T1) complex, also called positive transcription elongation factor B (P-TEFb), which facilitates the transition from abortive to productive elongation by phosphorylating the CTD (C-terminal domain) of the large subunit of RNA polymerase II (RNA Pol II). Required to activate the protein kinase activity of CDK9: acts by mediating formation of liquid-liquid phase separation (LLPS) that enhances binding of P-TEFb to the CTD of RNA Pol II. The chain is Cyclin-T1 (CCNT1) from Bos taurus (Bovine).